Here is a 511-residue protein sequence, read N- to C-terminus: Apolipoprotein N-acyltransferase (511 aa).

6 helical membrane passes run 24-44, 58-78, 90-110, 125-145, 163-183, and 192-212; these read LALA…LLYL, GWWY…VSIH, FLML…AWLW, LAFA…LTGF, VPVG…ALLV, and GASL…GLYL. Positions 230 to 470 constitute a CN hydrolase domain; the sequence is IQGNIAQELK…QGILRGEVIP (241 aa). Catalysis depends on Glu-269, which acts as the Proton acceptor. Residue Lys-330 is part of the active site. Cys-382 acts as the Nucleophile in catalysis. The chain crosses the membrane as a helical span at residues 482–502; that stretch reads VWPLAGLAGVLLLWALLGRQL.

This sequence belongs to the CN hydrolase family. Apolipoprotein N-acyltransferase subfamily.

It is found in the cell inner membrane. The catalysed reaction is N-terminal S-1,2-diacyl-sn-glyceryl-L-cysteinyl-[lipoprotein] + a glycerophospholipid = N-acyl-S-1,2-diacyl-sn-glyceryl-L-cysteinyl-[lipoprotein] + a 2-acyl-sn-glycero-3-phospholipid + H(+). It participates in protein modification; lipoprotein biosynthesis (N-acyl transfer). Functionally, catalyzes the phospholipid dependent N-acylation of the N-terminal cysteine of apolipoprotein, the last step in lipoprotein maturation. In Pseudomonas aeruginosa (strain UCBPP-PA14), this protein is Apolipoprotein N-acyltransferase.